Here is a 1192-residue protein sequence, read N- to C-terminus: DNA ligase 1 (1192 aa).

Disordered regions lie at residues 29-257 (ELNK…KEKE) and 280-517 (EKEL…KSTQ). Residues 42–56 (EAVVKEKVEKKEKKE) are compositionally biased toward basic and acidic residues. Residues 70–113 (EEEEEEQEEQDGEEEQEEEEEYQQQDEEIEEDINGEEEMELDEN) show a composition bias toward acidic residues. A compositionally biased stretch (basic and acidic residues) spans 141–155 (KTIENKETKKPEKQS). Acidic residues predominate over residues 172 to 198 (DDEEDEEDENKTDDNDLDDMLDDDSDN). Basic and acidic residues-rich tracts occupy residues 199–257 (EKDS…KEKE) and 280–368 (EKEL…RANA). Low complexity-rich tracts occupy residues 371 to 382 (KSSVPTSTSKNS) and 410 to 434 (STTTTTTTTTTSTATTISSKSISSP). Residues 435 to 467 (SKKEEKEVITSKKQVEATKVEVKKEKEKEKEKE) show a composition bias toward basic and acidic residues. Over residues 468–511 (KEDDEEEEEEEEDDDEKLEDIDEEEYEEEEEEDEEGISENEEEE) the composition is skewed to acidic residues. Residues 724 to 733 (KLRIGLAERS) are interaction with target DNA. An ATP-binding site is contributed by glutamate 842. The active-site N6-AMP-lysine intermediate is lysine 844. ATP contacts are provided by arginine 849 and arginine 865. Glutamate 897 serves as a coordination point for Mg(2+). Positions 918–920 (ARK) are interaction with target DNA. Glutamate 996 lines the Mg(2+) pocket. 3 residues coordinate ATP: lysine 1001, arginine 1014, and lysine 1020. Positions 1157 to 1192 (DKSPEDATSSDQVVDMYQNQKINSQSSKINEKDEDY) are disordered. Positions 1162-1184 (DATSSDQVVDMYQNQKINSQSSK) are enriched in polar residues.

It belongs to the ATP-dependent DNA ligase family. The cofactor is Mg(2+).

It is found in the nucleus. The catalysed reaction is ATP + (deoxyribonucleotide)n-3'-hydroxyl + 5'-phospho-(deoxyribonucleotide)m = (deoxyribonucleotide)n+m + AMP + diphosphate.. In terms of biological role, DNA ligase that seals nicks in double-stranded DNA during DNA replication, DNA recombination and DNA repair. This chain is DNA ligase 1 (lig1), found in Dictyostelium discoideum (Social amoeba).